An 851-amino-acid polypeptide reads, in one-letter code: METQLSVQLGLDSLLTDFGLESVMNKQQQLFANMGLSDIGAPTPSTAIPVPNAHLHPSMVAGSDPSNPVVGFGFGSPSSTTSSSPPLSNSPTIEQQQHAQLTAMMQGIMSNNNVAVSNGSGVQVASVPAVHCSGCKSNETATSFCQDCNANLCDNCTMAHKFMHCFADHRVVSLTTPGTGSSSSSTSSSSSASSTSSHQVPSLGGKQSPDSMMLGSGKRSVLCLQHRASELVFFCVSCNLAICRDCTVSDHPSGTHQYELIADVADKQMLKMEQLIADARSKHADMLDMFKQVDNKQQVLTASLHNAHAQLEETVSNLINVIQDQKKTLAKDIDNAFAAKQIQLTMVDKRIQSMADKLSQTIEFSRRLMSFASPAEVMVFKQLLDTRLQLFLGFNPDTSGVLMTPCEIEYLGAAGLFNNSASTVSQLLGSVHGGSPINNAPAANDFLMPQAGLAPIGRAQSRIIPIEQNQLARSPPHHIAGSLPMNAYSDSNLLRPNKDFGGSSQSLGPFNPLGASVPGAAADPFSSQYDKWSLGVEPSVGGLLEGGNVDEEKFQTLFPPSRSQIKRQKMIYHCKFGEFGVMEGQFTEPSGVAVNGQGDIVVADTNNHRIQVFDKEGRFKFQFGECGKRDGQLLYPNRVAVNRTTGDFVVTERSPTHQIQVYNQYGQFLRKFGANILQHPRGVCVDSKGRIIVVECKVMRVIIFDMFGNILQKFSCSRYLEFPNGVCTNDKNEILISDNRAHCIKVFSYEGQYLRQIGGEGVTNYPIGVGINSLGEVVVADNHNNFNLTVFSQDGTMIGALESRVKHAQCFDVALVDDGSVVLASKDYRLYLYRFLPATSGQSTSSASSQI.

The interval 71 to 91 (GFGFGSPSSTTSSSPPLSNSP) is disordered. The span at 76–91 (SPSSTTSSSPPLSNSP) shows a compositional bias: low complexity. Residues 127–174 (VPAVHCSGCKSNETATSFCQDCNANLCDNCTMAHKFMHCFADHRVVSL) form a B box-type 1; atypical zinc finger. Zn(2+) contacts are provided by Cys132, Cys135, Cys156, and His160. Residues 176-197 (TPGTGSSSSSTSSSSSASSTSS) show a composition bias toward low complexity. The disordered stretch occupies residues 176 to 211 (TPGTGSSSSSTSSSSSASSTSSHQVPSLGGKQSPDS). Residues 218 to 261 (KRSVLCLQHRASELVFFCVSCNLAICRDCTVSDHPSGTHQYELI) form a B box-type 2 zinc finger. 4 residues coordinate Zn(2+): Cys223, His226, Cys246, and His251. Residues 303–331 (SLHNAHAQLEETVSNLINVIQDQKKTLAK) adopt a coiled-coil conformation. NHL repeat units lie at residues 573-616 (HCKF…FDKE), 620-665 (KFQF…YNQY), 666-707 (GQFL…FDMF), 708-750 (GNIL…FSYE), and 751-794 (GQYL…FSQD).

In terms of tissue distribution, present in cells in which nucleoli are absent, and absent from large cells in which nucleoli are prominent. Highly expressed in the gonads.

It localises to the cytoplasm. In terms of biological role, translational repressor that inhibits protein synthesis. Represses the translation of mRNAs such as fib-1, probably by being recruited by RNA-binding protein nos-2 and the Pumilio proteins puf-5, puf-8 and puf-9 to the consensus core PUF binding motif in the 3'-UTR of fib-1 mRNA. Negatively regulates ribosomal RNA (rRNA) synthesis, ribosomal protein synthesis and nucleolus size. Its role in the negative regulation of nucleolus size is most likely through its negative regulation of the translation of proteins such as the rRNA 2'-O-methyltransferase fib-1, and dao-5. Might act directly as a transcription factor to inhibit RNA polymerase I (rRNA) and III (5S RNA) transcription. Plays a role in embryonic development, and in particular, is involved in regulating the localization of proteins, such as par-2, that are required for embryonic cell polarity. Plays a role in the regulation of lifespan, and the response to nutrient availability. In Caenorhabditis elegans, this protein is B-box type zinc finger protein ncl-1.